We begin with the raw amino-acid sequence, 343 residues long: L-idonate 5-dehydrogenase (NAD(P)(+)) (343 aa).

Zn(2+) contacts are provided by cysteine 40, histidine 65, cysteine 93, cysteine 96, cysteine 99, cysteine 107, and glutamate 153.

It belongs to the zinc-containing alcohol dehydrogenase family. The cofactor is Zn(2+).

The enzyme catalyses L-idonate + NADP(+) = 5-dehydro-D-gluconate + NADPH + H(+). The catalysed reaction is L-idonate + NAD(+) = 5-dehydro-D-gluconate + NADH + H(+). The protein operates within carbohydrate acid metabolism; L-idonate degradation. In terms of biological role, catalyzes the NADH/NADPH-dependent oxidation of L-idonate to 5-ketogluconate (5KG). The sequence is that of L-idonate 5-dehydrogenase (NAD(P)(+)) (idnD) from Escherichia coli (strain K12).